The chain runs to 199 residues: Molybdenum cofactor guanylyltransferase (199 aa).

Residues 12–14 (LAG), K25, N53, D71, and D101 contribute to the GTP site. D101 is a Mg(2+) binding site.

This sequence belongs to the MobA family. In terms of assembly, monomer. The cofactor is Mg(2+).

It is found in the cytoplasm. The enzyme catalyses Mo-molybdopterin + GTP + H(+) = Mo-molybdopterin guanine dinucleotide + diphosphate. In terms of biological role, transfers a GMP moiety from GTP to Mo-molybdopterin (Mo-MPT) cofactor (Moco or molybdenum cofactor) to form Mo-molybdopterin guanine dinucleotide (Mo-MGD) cofactor. This chain is Molybdenum cofactor guanylyltransferase, found in Cupriavidus pinatubonensis (strain JMP 134 / LMG 1197) (Cupriavidus necator (strain JMP 134)).